Here is a 300-residue protein sequence, read N- to C-terminus: Ribosomal protein bS6--L-glutamate ligase (300 aa).

Positions 104-287 (MQLLARQGID…IAGKMIRWIE (184 aa)) constitute an ATP-grasp domain. ATP contacts are provided by residues lysine 141, 178 to 179 (EY), aspartate 187, and 211 to 213 (RSN). Residues aspartate 248, glutamate 260, and asparagine 262 each coordinate Mg(2+). Mn(2+) is bound by residues aspartate 248, glutamate 260, and asparagine 262.

The protein belongs to the RimK family. The cofactor is Mg(2+). Mn(2+) serves as cofactor.

An L-glutamate ligase that catalyzes the ATP-dependent post-translational addition of glutamate residues to the C-terminus of ribosomal protein bS6 (RpsF). Is also able to catalyze the synthesis of poly-alpha-glutamate in vitro, via ATP hydrolysis from unprotected glutamate as substrate. The number of glutamate residues added to either RpsF or to poly-alpha-glutamate changes with pH. The chain is Ribosomal protein bS6--L-glutamate ligase from Escherichia coli O139:H28 (strain E24377A / ETEC).